The sequence spans 569 residues: Peroxisomal targeting signal receptor (569 aa).

Cys-9 is covalently cross-linked (Glycyl cysteine thioester (Cys-Gly) (interchain with G-Cter in ubiquitin)). Residues 10-32 (AANANPLAQFFKQSQHDTSLEQS) form an amphipathic helix 1 (AH1) region. Lys-21 is covalently cross-linked (Glycyl lysine isopeptide (Lys-Gly) (interchain with G-Cter in ubiquitin)). Residues 23 to 42 (SQHDTSLEQSLRNSAHDTHQ) are disordered. The interval 57–72 (RAHMEQFMNQSTPFNF) is amphipathic helix 2 (AH2). 2 consecutive short sequence motifs (wxxxF/Y motif) follow at residues 118–122 (WSSEF) and 183–187 (WEQQF). The amphipathic helix 4 (AH4) stretch occupies residues 218-234 (FDQVWDNIQETYADNML). Positions 243 to 247 (WEKDF) match the WxxxF/Y motif 3 motif. TPR repeat units lie at residues 272-305 (LDAY…NPGH), 306-339 (VDAW…SPQN), 340-377 (LVAL…VAER), 378-415 (ARNA…ANMD), 416-449 (SEVQ…NPND), 450-483 (ALAW…NPNF), and 484-517 (VRAR…HEVE).

It belongs to the peroxisomal targeting signal receptor family. Interacts (via WxxxF/Y and LVxEF motifs) with PEX14; promoting translocation through the PEX13-PEX14 docking complex. Monoubiquitinated at Cys-9 by PEX2 during PEX5 passage through the retrotranslocation channel: monoubiquitination acts as a signal for PEX5 extraction and is required for proper export from peroxisomes and recycling. When PEX5 recycling is compromised, polyubiquitinated at Lys-21 by PEX10 during its passage through the retrotranslocation channel, leading to its degradation.

Its subcellular location is the cytoplasm. It is found in the cytosol. The protein resides in the peroxisome matrix. Receptor that mediates peroxisomal import of proteins containing a C-terminal PTS1-type tripeptide peroxisomal targeting signal (SKL-type). Binds to cargo proteins containing a PTS1 peroxisomal targeting signal in the cytosol, and translocates them into the peroxisome matrix by passing through the PEX13-PEX14 docking complex along with cargo proteins. PEX5 receptor is then retrotranslocated into the cytosol, leading to release of bound cargo in the peroxisome matrix, and reset for a subsequent peroxisome import cycle. This Pichia angusta (Yeast) protein is Peroxisomal targeting signal receptor (PEX5).